The following is a 416-amino-acid chain: Gamma-glutamyl phosphate reductase (416 aa).

It belongs to the gamma-glutamyl phosphate reductase family.

Its subcellular location is the cytoplasm. It catalyses the reaction L-glutamate 5-semialdehyde + phosphate + NADP(+) = L-glutamyl 5-phosphate + NADPH + H(+). It functions in the pathway amino-acid biosynthesis; L-proline biosynthesis; L-glutamate 5-semialdehyde from L-glutamate: step 2/2. Functionally, catalyzes the NADPH-dependent reduction of L-glutamate 5-phosphate into L-glutamate 5-semialdehyde and phosphate. The product spontaneously undergoes cyclization to form 1-pyrroline-5-carboxylate. The chain is Gamma-glutamyl phosphate reductase from Vibrio atlanticus (strain LGP32) (Vibrio splendidus (strain Mel32)).